Reading from the N-terminus, the 119-residue chain is Small ribosomal subunit protein bS6 (119 aa).

Belongs to the bacterial ribosomal protein bS6 family.

Functionally, binds together with bS18 to 16S ribosomal RNA. The chain is Small ribosomal subunit protein bS6 from Buchnera aphidicola subsp. Baizongia pistaciae (strain Bp).